An 89-amino-acid polypeptide reads, in one-letter code: Small ribosomal subunit protein uS15 (89 aa).

Belongs to the universal ribosomal protein uS15 family. As to quaternary structure, part of the 30S ribosomal subunit. Forms a bridge to the 50S subunit in the 70S ribosome, contacting the 23S rRNA.

In terms of biological role, one of the primary rRNA binding proteins, it binds directly to 16S rRNA where it helps nucleate assembly of the platform of the 30S subunit by binding and bridging several RNA helices of the 16S rRNA. Functionally, forms an intersubunit bridge (bridge B4) with the 23S rRNA of the 50S subunit in the ribosome. This Streptococcus mutans serotype c (strain ATCC 700610 / UA159) protein is Small ribosomal subunit protein uS15.